We begin with the raw amino-acid sequence, 478 residues long: Subtilisin-like protease 3 (478 aa).

The first 17 residues, 1 to 17, serve as a signal peptide directing secretion; that stretch reads MKFSTILPILWANCCLC. Positions 70-167 constitute an Inhibitor I9 domain; it reads RYVIVFNEDI…FVEQETTVKI (98 aa). In terms of domain architecture, Peptidase S8 spans 177–478; the sequence is PWGLHRVSHR…GGGKKLDGFW (302 aa). Active-site charge relay system residues include aspartate 213, histidine 245, and serine 407.

Belongs to the peptidase S8 family.

Serine protease with unknown substrate. The sequence is that of Subtilisin-like protease 3 (YSP3) from Saccharomyces cerevisiae (strain ATCC 204508 / S288c) (Baker's yeast).